We begin with the raw amino-acid sequence, 104 residues long: Small ribosomal subunit protein uS10 (104 aa).

The protein belongs to the universal ribosomal protein uS10 family. As to quaternary structure, part of the 30S ribosomal subunit.

Involved in the binding of tRNA to the ribosomes. The chain is Small ribosomal subunit protein uS10 from Helicobacter pylori (strain P12).